Reading from the N-terminus, the 162-residue chain is NADH-quinone oxidoreductase subunit I (162 aa).

4Fe-4S ferredoxin-type domains lie at 52–82 (LRRY…IEAG) and 93–122 (TRYD…EGPN). [4Fe-4S] cluster contacts are provided by C62, C65, C68, C72, C102, C105, C108, and C112.

This sequence belongs to the complex I 23 kDa subunit family. As to quaternary structure, NDH-1 is composed of 14 different subunits. Subunits NuoA, H, J, K, L, M, N constitute the membrane sector of the complex. It depends on [4Fe-4S] cluster as a cofactor.

The protein localises to the cell inner membrane. The enzyme catalyses a quinone + NADH + 5 H(+)(in) = a quinol + NAD(+) + 4 H(+)(out). In terms of biological role, NDH-1 shuttles electrons from NADH, via FMN and iron-sulfur (Fe-S) centers, to quinones in the respiratory chain. The immediate electron acceptor for the enzyme in this species is believed to be ubiquinone. Couples the redox reaction to proton translocation (for every two electrons transferred, four hydrogen ions are translocated across the cytoplasmic membrane), and thus conserves the redox energy in a proton gradient. This chain is NADH-quinone oxidoreductase subunit I, found in Methylobacterium radiotolerans (strain ATCC 27329 / DSM 1819 / JCM 2831 / NBRC 15690 / NCIMB 10815 / 0-1).